The sequence spans 366 residues: MTPEHLPTEQYEAQLAEKVSRLQSMMAPFSDLVPEVFRSPVSHYRMRAEFRLWHDGDDLYHIMFDQQTKSRIRVDTFPAASQLINTLMKAMIAGVRDNHALRHKLFQIDYLTTLSNQAVVSLLYHKKLDEEWREAATALRDALRAQGLNVHLIGRATKTKIELDQDYIDERLPVAGKEMIYRQVENSFTQPNAAMNIQMLEWALEVTKDSKGDLLELYCGNGNFSLALARNFNRVLATEIAKPSVAAAQYNIAANHIDNVQIIRMAAEEFTQAMNGVREFNRLQGIDLKRYQCETIFVDPPRSGLDSETEKMVQAYPRILYISCNPETLCKNLETLSQTHTVSRLALFDQFPYTHHMECGVLLTAR.

S-adenosyl-L-methionine is bound by residues glutamine 190, tyrosine 218, asparagine 223, glutamate 239, and aspartate 299. Cysteine 324 serves as the catalytic Nucleophile. The active-site Proton acceptor is the glutamate 358.

The protein belongs to the class I-like SAM-binding methyltransferase superfamily. RNA M5U methyltransferase family. TrmA subfamily.

It carries out the reaction uridine(54) in tRNA + S-adenosyl-L-methionine = 5-methyluridine(54) in tRNA + S-adenosyl-L-homocysteine + H(+). The catalysed reaction is uridine(341) in tmRNA + S-adenosyl-L-methionine = 5-methyluridine(341) in tmRNA + S-adenosyl-L-homocysteine + H(+). Functionally, dual-specificity methyltransferase that catalyzes the formation of 5-methyluridine at position 54 (m5U54) in all tRNAs, and that of position 341 (m5U341) in tmRNA (transfer-mRNA). In Salmonella paratyphi B (strain ATCC BAA-1250 / SPB7), this protein is tRNA/tmRNA (uracil-C(5))-methyltransferase.